We begin with the raw amino-acid sequence, 98 residues long: NADH-ubiquinone oxidoreductase chain 4L (98 aa).

Transmembrane regions (helical) follow at residues Thr-2–Phe-22, Leu-26–Ile-46, and Ile-61–Val-81.

This sequence belongs to the complex I subunit 4L family. Core subunit of respiratory chain NADH dehydrogenase (Complex I) which is composed of 45 different subunits.

The protein resides in the mitochondrion inner membrane. It carries out the reaction a ubiquinone + NADH + 5 H(+)(in) = a ubiquinol + NAD(+) + 4 H(+)(out). Core subunit of the mitochondrial membrane respiratory chain NADH dehydrogenase (Complex I) which catalyzes electron transfer from NADH through the respiratory chain, using ubiquinone as an electron acceptor. Part of the enzyme membrane arm which is embedded in the lipid bilayer and involved in proton translocation. The polypeptide is NADH-ubiquinone oxidoreductase chain 4L (MT-ND4L) (Nyctomys sumichrasti (Sumichrast's vesper rat)).